The sequence spans 233 residues: Large ribosomal subunit protein uL1 (233 aa).

Belongs to the universal ribosomal protein uL1 family. In terms of assembly, part of the 50S ribosomal subunit.

Its function is as follows. Binds directly to 23S rRNA. The L1 stalk is quite mobile in the ribosome, and is involved in E site tRNA release. Functionally, protein L1 is also a translational repressor protein, it controls the translation of the L11 operon by binding to its mRNA. The polypeptide is Large ribosomal subunit protein uL1 (Psychrobacter cryohalolentis (strain ATCC BAA-1226 / DSM 17306 / VKM B-2378 / K5)).